The sequence spans 320 residues: TPR repeat-containing protein MJ0263 (320 aa).

9 TPR repeats span residues isoleucine 12–asparagine 45, proline 46–serine 79, leucine 80–cysteine 113, tyrosine 114–leucine 147, threonine 148–aspartate 181, alanine 182–leucine 215, valine 216–aspartate 249, valine 250–lysine 283, and lysine 289–isoleucine 320.

The chain is TPR repeat-containing protein MJ0263 from Methanocaldococcus jannaschii (strain ATCC 43067 / DSM 2661 / JAL-1 / JCM 10045 / NBRC 100440) (Methanococcus jannaschii).